Here is a 223-residue protein sequence, read N- to C-terminus: UPF0441 protein YgiB (223 aa).

Positions T178–T195 are enriched in low complexity. The tract at residues T178–G223 is disordered. Polar residues predominate over residues A204 to G223.

It belongs to the UPF0441 family.

The sequence is that of UPF0441 protein YgiB from Shigella boydii serotype 18 (strain CDC 3083-94 / BS512).